The chain runs to 455 residues: Virion host shutoff protein (455 aa).

Belongs to the herpesviridae VHS protein family.

It localises to the virion. In terms of biological role, minor structural protein that acts as an endoribonuclease during lytic infection. Degrades host mRNAs in the cytoplasm by cutting them at preferred sites, including some in regions of translation initiation. In Homo sapiens (Human), this protein is Virion host shutoff protein (17).